A 436-amino-acid polypeptide reads, in one-letter code: tRNA pseudouridine synthase Pus10 (436 aa).

D254 acts as the Nucleophile in catalysis. Positions 322 and 394 each coordinate substrate.

Belongs to the pseudouridine synthase Pus10 family.

The enzyme catalyses uridine(54) in tRNA = pseudouridine(54) in tRNA. It carries out the reaction uridine(55) in tRNA = pseudouridine(55) in tRNA. In terms of biological role, responsible for synthesis of pseudouridine from uracil-54 and uracil-55 in the psi GC loop of transfer RNAs. In Methanopyrus kandleri (strain AV19 / DSM 6324 / JCM 9639 / NBRC 100938), this protein is tRNA pseudouridine synthase Pus10.